The sequence spans 218 residues: Glutathione S-transferase Mu 4 (218 aa).

The GST N-terminal domain maps to Met1–Gly88. Residues Tyr7–Trp8, Trp46–Lys50, Asn59–Leu60, and Gln72–Ser73 each bind glutathione. A GST C-terminal domain is found at Thr90–Leu208. Tyr116 provides a ligand contact to substrate.

It belongs to the GST superfamily. Mu family. In terms of assembly, homodimer.

It is found in the cytoplasm. The enzyme catalyses RX + glutathione = an S-substituted glutathione + a halide anion + H(+). The catalysed reaction is 1-chloro-2,4-dinitrobenzene + glutathione = 2,4-dinitrophenyl-S-glutathione + chloride + H(+). It catalyses the reaction (13S,14S)-epoxy-(4Z,7Z,9E,11E,16Z,19Z)-docosahexaenoate + glutathione = (13R)-S-glutathionyl-(14S)-hydroxy-(4Z,7Z,9E,11E,16Z,19Z)-docosahexaenoate. It carries out the reaction leukotriene C4 = leukotriene A4 + glutathione. Conjugation of reduced glutathione to a wide number of exogenous and endogenous hydrophobic electrophiles. Catalyzes the conjugation of leukotriene A4 with reduced glutathione (GSH) to form leukotriene C4. Can also catalyze the transfer of a glutathionyl group from glutathione (GSH) to 13(S),14(S)-epoxy-docosahexaenoic acid to form maresin conjugate in tissue regeneration 1 (MCTR1), a bioactive lipid mediator that possess potent anti-inflammatory and proresolving actions. The chain is Glutathione S-transferase Mu 4 (Gstm4) from Rattus norvegicus (Rat).